A 114-amino-acid polypeptide reads, in one-letter code: MKPKPSQFKNLERMLGLKTEQLDAVKVTIELKDKILIIENPTVIKMIAQGQEIYSVIGEAKEAQKEEPKVEIKDEDVKFVMEQTGKGEQEVKEALQKANGDIAKAILLLTGQET.

Residues 5–69 form the NAC-A/B domain; it reads PSQFKNLERM…AKEAQKEEPK (65 aa).

Belongs to the NAC-alpha family. As to quaternary structure, homodimer. Interacts with the ribosome. Binds ribosomal RNA.

Contacts the emerging nascent chain on the ribosome. The protein is Nascent polypeptide-associated complex protein of Sulfurisphaera tokodaii (strain DSM 16993 / JCM 10545 / NBRC 100140 / 7) (Sulfolobus tokodaii).